The chain runs to 690 residues: Elongation factor G (690 aa).

The tr-type G domain occupies glutamate 8 to valine 283. GTP contacts are provided by residues alanine 17–threonine 24, aspartate 81–histidine 85, and asparagine 135–aspartate 138.

This sequence belongs to the TRAFAC class translation factor GTPase superfamily. Classic translation factor GTPase family. EF-G/EF-2 subfamily.

The protein localises to the cytoplasm. Catalyzes the GTP-dependent ribosomal translocation step during translation elongation. During this step, the ribosome changes from the pre-translocational (PRE) to the post-translocational (POST) state as the newly formed A-site-bound peptidyl-tRNA and P-site-bound deacylated tRNA move to the P and E sites, respectively. Catalyzes the coordinated movement of the two tRNA molecules, the mRNA and conformational changes in the ribosome. The chain is Elongation factor G from Rhodopseudomonas palustris (strain BisA53).